Consider the following 195-residue polypeptide: MRTAEITRNTNETRIRVAVNLDGTGKQTIDTGVPFLDHMLDQIARHGLIDLDIKADGDLHIDAHHTVEDVGITLGMAIAKAVGSKAGLRRYGHAYVPLDEALSRVVIDFSGRPGLEYHIDFTRARIGDFDVDLTREFFQGLVNHALMTLHIDNLRGFNAHHQCETVFKAFGRALRMALEVDPRMGDAVPSTKGVL.

Belongs to the imidazoleglycerol-phosphate dehydratase family.

It is found in the cytoplasm. It catalyses the reaction D-erythro-1-(imidazol-4-yl)glycerol 3-phosphate = 3-(imidazol-4-yl)-2-oxopropyl phosphate + H2O. It functions in the pathway amino-acid biosynthesis; L-histidine biosynthesis; L-histidine from 5-phospho-alpha-D-ribose 1-diphosphate: step 6/9. The protein is Imidazoleglycerol-phosphate dehydratase of Bordetella bronchiseptica (strain ATCC BAA-588 / NCTC 13252 / RB50) (Alcaligenes bronchisepticus).